The sequence spans 522 residues: Leucine-rich repeat transmembrane neuronal protein 1 (522 aa).

An N-terminal signal peptide occupies residues 1–34 (MDFLLLGLCLYWLLRRPSGVVLCLLGACFQMLPA). Residues 35 to 63 (APSGCPQLCRCEGRLLYCEALNPTEAPHN) form the LRRNT domain. At 35–427 (APSGCPQLCR…HAENAVQIHK (393 aa)) the chain is on the extracellular side. Asn63 carries N-linked (GlcNAc...) asparagine glycosylation. LRR repeat units follow at residues 64 to 87 (LSGL…QFTG), 89 to 111 (MQLT…AFQK), 112 to 135 (LRRV…TFRP), 137 to 159 (PNLR…LFHG), 161 to 183 (RKLT…IFQD), 184 to 207 (CRSL…SFAG), 209 to 231 (FKLT…HFPR), 233 to 255 (ISLH…LDWV), 256 to 278 (WNLK…VFET), and 279 to 302 (VPHL…ILNS). Asn130 carries N-linked (GlcNAc...) asparagine glycosylation. The LRRCT domain maps to 314 to 365 (NLWDCGRNVCALASWLSNFQGRYDGNLQCASPEYAQGEDVLDAVYAFHLCED). Asn380 is a glycosylation site (N-linked (GlcNAc...) asparagine). The tract at residues 382 to 401 (SDLGPPASSATTLADGGEGQ) is disordered. A helical transmembrane segment spans residues 428–448 (VVTGTMALIFSFLIVVLVLYV). Topologically, residues 449-522 (SWKCFPASLR…HQQPARECEV (74 aa)) are cytoplasmic.

The protein belongs to the LRRTM family.

The protein localises to the cell membrane. It localises to the postsynaptic cell membrane. In terms of biological role, exhibits strong synaptogenic activity, restricted to excitatory presynaptic differentiation, acting at both pre- and postsynaptic level. This chain is Leucine-rich repeat transmembrane neuronal protein 1 (LRRTM1), found in Pongo abelii (Sumatran orangutan).